Here is a 562-residue protein sequence, read N- to C-terminus: Terpene synthase 2 (562 aa).

4 residues coordinate Mg(2+): Asp-315, Asp-319, Asp-459, and Glu-467. Residues 315-319 (DDEYD) carry the DDXXD motif motif.

The protein belongs to the terpene synthase family. Tpsa subfamily. Requires Mg(2+) as cofactor. Mn(2+) is required as a cofactor. In terms of tissue distribution, expressed at low levels in stems, leaves, roots and fruits.

The enzyme catalyses (2E,6E)-farnesyl diphosphate = delta-cadinene + diphosphate. It catalyses the reaction (2E,6E)-farnesyl diphosphate = alpha-cadinene + diphosphate. The catalysed reaction is (2E,6E)-farnesyl diphosphate + H2O = (-)-delta-cadinol + diphosphate. The protein operates within secondary metabolite biosynthesis; terpenoid biosynthesis. Functionally, sesquiterpene synthase involved in the biosynthesis of volatile compounds that contribute to the characteristic flavors of black pepper. Mediates the conversion of (2E,6E)-farnesyl diphosphate (FPP) into alpha-cadinene, delta-cadinene and delta-cadinol. This Piper nigrum (Black pepper) protein is Terpene synthase 2.